A 469-amino-acid polypeptide reads, in one-letter code: MSAPRTLYDKIFDDHVVDRQDDGTCLLYIDRHLVHEVTSPQAFEGLRLSGRKVRHPEKTLAVVDHNVSTSPERKFGIKNEESRIQVEALAKNAKDFGVEYYSENDIRQGIVHIIGPEQGFTLPGMTIVCGDSHTSTHGAFGALAHGIGTSEVEHVLATQTLIQRKAKNMLVRVDGQLPEGVTAKDIILAIIGEIGTAGGTGYVIEYAGEAIRSLSMEGRMTICNMSIEGGARAGLIAADETTFAYVKDKPRAPKGAAWDAALAYWKTLQSDEGAHFDKVIVLDAAKLPPIVSWGSSPEDVVSVQGVVPNPEEITDENKRTSKIRALDYMGLTPGTKITDIALDRVFIGSCTNGRIEDLRAAAKVIEGKTVNPRVNAMIVPGSGLVKEQAEAEGLDKIFLAAGFDWREPGCSMCLAMNDDRLKPHERCASTSNRNFEGRQGFKGRTHLVSPAMAAAAAIAGHFVDIRDWK.

Residues cysteine 350, cysteine 410, and cysteine 413 each contribute to the [4Fe-4S] cluster site.

This sequence belongs to the aconitase/IPM isomerase family. LeuC type 1 subfamily. In terms of assembly, heterodimer of LeuC and LeuD. It depends on [4Fe-4S] cluster as a cofactor.

The catalysed reaction is (2R,3S)-3-isopropylmalate = (2S)-2-isopropylmalate. The protein operates within amino-acid biosynthesis; L-leucine biosynthesis; L-leucine from 3-methyl-2-oxobutanoate: step 2/4. Its function is as follows. Catalyzes the isomerization between 2-isopropylmalate and 3-isopropylmalate, via the formation of 2-isopropylmaleate. This chain is 3-isopropylmalate dehydratase large subunit, found in Mesorhizobium japonicum (strain LMG 29417 / CECT 9101 / MAFF 303099) (Mesorhizobium loti (strain MAFF 303099)).